We begin with the raw amino-acid sequence, 117 residues long: Large ribosomal subunit protein uL22 (117 aa).

This sequence belongs to the universal ribosomal protein uL22 family. As to quaternary structure, part of the 50S ribosomal subunit.

This protein binds specifically to 23S rRNA; its binding is stimulated by other ribosomal proteins, e.g. L4, L17, and L20. It is important during the early stages of 50S assembly. It makes multiple contacts with different domains of the 23S rRNA in the assembled 50S subunit and ribosome. In terms of biological role, the globular domain of the protein is located near the polypeptide exit tunnel on the outside of the subunit, while an extended beta-hairpin is found that lines the wall of the exit tunnel in the center of the 70S ribosome. The protein is Large ribosomal subunit protein uL22 of Staphylococcus epidermidis (strain ATCC 35984 / DSM 28319 / BCRC 17069 / CCUG 31568 / BM 3577 / RP62A).